Consider the following 54-residue polypeptide: Large ribosomal subunit protein bL33B (54 aa).

The protein belongs to the bacterial ribosomal protein bL33 family.

This Myxococcus xanthus (strain DK1622) protein is Large ribosomal subunit protein bL33B.